Consider the following 281-residue polypeptide: uncharacterized protein (281 aa).

4 helical membrane-spanning segments follow: residues 8–28 (ALPV…FIWS), 97–117 (LAVA…RGYG), 147–167 (PARI…GLAV), and 210–230 (IASV…IVPA).

It to S.pombe bem46 and yeast YNL320w.

The protein resides in the cell membrane. This is an uncharacterized protein from Mycobacterium tuberculosis (strain ATCC 25618 / H37Rv).